Reading from the N-terminus, the 256-residue chain is Type III pantothenate kinase (256 aa).

Asp6–Val13 contacts ATP. Gly107–Arg110 contacts substrate. The Proton acceptor role is filled by Asp109. Residue Asp129 participates in K(+) binding. Thr132 contacts ATP. Thr184 serves as a coordination point for substrate.

This sequence belongs to the type III pantothenate kinase family. As to quaternary structure, homodimer. NH4(+) serves as cofactor. Requires K(+) as cofactor.

It is found in the cytoplasm. It catalyses the reaction (R)-pantothenate + ATP = (R)-4'-phosphopantothenate + ADP + H(+). The protein operates within cofactor biosynthesis; coenzyme A biosynthesis; CoA from (R)-pantothenate: step 1/5. In terms of biological role, catalyzes the phosphorylation of pantothenate (Pan), the first step in CoA biosynthesis. This chain is Type III pantothenate kinase, found in Pelotomaculum thermopropionicum (strain DSM 13744 / JCM 10971 / SI).